The following is a 223-amino-acid chain: Alpha-S2-casein (223 aa).

The N-terminal stretch at 1–15 (MKLFIFTCLLAVALA) is a signal peptide. Phosphoserine occurs at positions 23, 24, 25, 28, 46, 71, 72, and 73. 2 repeats span residues 76 to 128 (FADI…TLGK) and 129 to 223 (EQIS…ERQA). Residues Ser132, Ser147, and Ser155 each carry the phosphoserine modification.

Belongs to the alpha-casein family. Mammary gland specific. Secreted in milk.

It is found in the secreted. Functionally, important role in the capacity of milk to transport calcium phosphate. In Cavia porcellus (Guinea pig), this protein is Alpha-S2-casein (CSN1S2).